A 670-amino-acid chain; its full sequence is Zinc finger protein 233 (670 aa).

The KRAB domain maps to 8–79; sequence VTFKDVAVVF…ETEIQGDGCS (72 aa). The C2H2-type 1; degenerate zinc finger occupies 258–280; sequence QTSDENGKGLSVGSNLELHQQLH. The C2H2-type 2; degenerate zinc finger occupies 311–336; sequence EKCYRNGDSGEGFSQGSHLQPHQRVS. Residues 342 to 364 form a C2H2-type 3; degenerate zinc finger; sequence YRCQVYARSSNQNSCLPSHELTH. The C2H2-type 4; degenerate zinc-finger motif lies at 370–392; the sequence is CTCGRCGKGFHHSLDFDIHCVDS. Residues 398–420 form a C2H2-type 5; degenerate zinc finger; that stretch reads CKCDVYDKGFSQTSQLQAHQRGH. 7 consecutive C2H2-type zinc fingers follow at residues 452 to 474, 480 to 502, 508 to 530, 536 to 558, 564 to 586, 592 to 614, and 620 to 642; these read YKCE…QRIH, YKCD…QRVH, YKCE…QQVH, and YKCG…QRVH.

This sequence belongs to the krueppel C2H2-type zinc-finger protein family.

Its subcellular location is the nucleus. Its function is as follows. May be involved in transcriptional regulation. This Homo sapiens (Human) protein is Zinc finger protein 233 (ZNF233).